The primary structure comprises 314 residues: Aspartate carbamoyltransferase catalytic subunit (314 aa).

Carbamoyl phosphate is bound by residues arginine 55 and threonine 56. Lysine 83 provides a ligand contact to L-aspartate. Residues arginine 105, histidine 139, and glutamine 142 each coordinate carbamoyl phosphate. Residues arginine 172 and arginine 226 each coordinate L-aspartate. Carbamoyl phosphate is bound by residues glycine 267 and proline 268.

This sequence belongs to the aspartate/ornithine carbamoyltransferase superfamily. ATCase family. Heterododecamer (2C3:3R2) of six catalytic PyrB chains organized as two trimers (C3), and six regulatory PyrI chains organized as three dimers (R2).

The enzyme catalyses carbamoyl phosphate + L-aspartate = N-carbamoyl-L-aspartate + phosphate + H(+). The protein operates within pyrimidine metabolism; UMP biosynthesis via de novo pathway; (S)-dihydroorotate from bicarbonate: step 2/3. Functionally, catalyzes the condensation of carbamoyl phosphate and aspartate to form carbamoyl aspartate and inorganic phosphate, the committed step in the de novo pyrimidine nucleotide biosynthesis pathway. The polypeptide is Aspartate carbamoyltransferase catalytic subunit (Rhodococcus erythropolis (strain PR4 / NBRC 100887)).